The following is a 211-amino-acid chain: FMN-dependent NADH:quinone oxidoreductase 2 (211 aa).

Residues S10 and 17–19 (SRS) contribute to the FMN site.

The protein belongs to the azoreductase type 1 family. Homodimer. The cofactor is FMN.

The enzyme catalyses 2 a quinone + NADH + H(+) = 2 a 1,4-benzosemiquinone + NAD(+). The catalysed reaction is N,N-dimethyl-1,4-phenylenediamine + anthranilate + 2 NAD(+) = 2-(4-dimethylaminophenyl)diazenylbenzoate + 2 NADH + 2 H(+). Its function is as follows. Quinone reductase that provides resistance to thiol-specific stress caused by electrophilic quinones. Functionally, also exhibits azoreductase activity. Catalyzes the reductive cleavage of the azo bond in aromatic azo compounds to the corresponding amines. This Listeria innocua serovar 6a (strain ATCC BAA-680 / CLIP 11262) protein is FMN-dependent NADH:quinone oxidoreductase 2.